Here is a 578-residue protein sequence, read N- to C-terminus: Sulfite reductase [NADPH] hemoprotein beta-component (578 aa).

Residues 1 to 21 (MTNTLAGPDRSRDISQPLEKL) form a disordered region. The [4Fe-4S] cluster site is built by C443, C449, C488, and C492. Position 492 (C492) interacts with siroheme.

This sequence belongs to the nitrite and sulfite reductase 4Fe-4S domain family. In terms of assembly, alpha(8)-beta(8). The alpha component is a flavoprotein, the beta component is a hemoprotein. The cofactor is siroheme. It depends on [4Fe-4S] cluster as a cofactor.

It carries out the reaction hydrogen sulfide + 3 NADP(+) + 3 H2O = sulfite + 3 NADPH + 4 H(+). Its pathway is sulfur metabolism; hydrogen sulfide biosynthesis; hydrogen sulfide from sulfite (NADPH route): step 1/1. In terms of biological role, component of the sulfite reductase complex that catalyzes the 6-electron reduction of sulfite to sulfide. This is one of several activities required for the biosynthesis of L-cysteine from sulfate. This is Sulfite reductase [NADPH] hemoprotein beta-component from Methylocella silvestris (strain DSM 15510 / CIP 108128 / LMG 27833 / NCIMB 13906 / BL2).